Consider the following 261-residue polypeptide: MNILPKKSWHVRNKDNVARVRRDEAQAREEEKERERRVLLAQQEARTEFLRKKARQRNSVPELEAADPGAPSSGPVDLFRELLEERKGVPRGNKEHEEEKRREKERQEKALGILTYLGQSAAEAQTQPPWYQLPPGQKDCCPPGPSPDEKIKNRLDPLKEMQKHLAKKRHSSESRPSREERPQKQRPREPPSLEKLRAERLQREAAERARAEALLARVQGQVSQQGQVEAEETDERRRRYNSQFNPQLARRPRQQNPTPAH.

The tract at residues 1-261 (MNILPKKSWH…PRQQNPTPAH (261 aa)) is disordered. The span at 12–38 (RNKDNVARVRRDEAQAREEEKERERRV) shows a compositional bias: basic and acidic residues. Residues 16 to 46 (NVARVRRDEAQAREEEKERERRVLLAQQEAR) adopt a coiled-coil conformation. The residue at position 59 (Ser59) is a Phosphoserine. 3 stretches are compositionally biased toward basic and acidic residues: residues 78–109 (LFRELLEERKGVPRGNKEHEEEKRREKERQEK), 147–163 (PDEKIKNRLDPLKEMQK), and 171–211 (SSES…RARA). The stretch at 192-222 (SLEKLRAERLQREAAERARAEALLARVQGQV) forms a coiled coil. The segment covering 212-228 (EALLARVQGQVSQQGQV) has biased composition (low complexity). The residue at position 242 (Ser242) is a Phosphoserine.

The polypeptide is Leukocyte receptor cluster member 1 homolog (Leng1) (Mus musculus (Mouse)).